Consider the following 279-residue polypeptide: Phosphatidylglycerol--prolipoprotein diacylglyceryl transferase (279 aa).

3 helical membrane-spanning segments follow: residues 18–38, 55–75, and 89–109; these read LSVR…YFVA, IIFY…VIFQ, and IWHG…AGVI. Arginine 137 is an a 1,2-diacyl-sn-glycero-3-phospho-(1'-sn-glycerol) binding site. 2 helical membrane passes run 203–223 and 235–255; these read LGET…FIEG and IRVA…LIVY.

Belongs to the Lgt family.

It is found in the cell membrane. It carries out the reaction L-cysteinyl-[prolipoprotein] + a 1,2-diacyl-sn-glycero-3-phospho-(1'-sn-glycerol) = an S-1,2-diacyl-sn-glyceryl-L-cysteinyl-[prolipoprotein] + sn-glycerol 1-phosphate + H(+). The protein operates within protein modification; lipoprotein biosynthesis (diacylglyceryl transfer). In terms of biological role, catalyzes the transfer of the diacylglyceryl group from phosphatidylglycerol to the sulfhydryl group of the N-terminal cysteine of a prolipoprotein, the first step in the formation of mature lipoproteins. The sequence is that of Phosphatidylglycerol--prolipoprotein diacylglyceryl transferase from Staphylococcus aureus (strain MSSA476).